A 714-amino-acid chain; its full sequence is Glycine--tRNA ligase beta subunit (714 aa).

The protein belongs to the class-II aminoacyl-tRNA synthetase family. In terms of assembly, tetramer of two alpha and two beta subunits.

The protein resides in the cytoplasm. It carries out the reaction tRNA(Gly) + glycine + ATP = glycyl-tRNA(Gly) + AMP + diphosphate. The sequence is that of Glycine--tRNA ligase beta subunit from Rhodospirillum centenum (strain ATCC 51521 / SW).